A 34-amino-acid polypeptide reads, in one-letter code: Mu-theraphotoxin-Pspp1 (34 aa).

3 disulfides stabilise this stretch: Cys2/Cys17, Cys9/Cys22, and Cys16/Cys29. Phe34 carries the phenylalanine amide modification.

Belongs to the neurotoxin 10 (Hwtx-1) family. In terms of tissue distribution, expressed by the venom gland.

Its subcellular location is the secreted. In terms of biological role, voltage-gated sodium channel inhibitor. It is unclear if it selectively inhibits Nav1.7/SCN9A or shows similar potency on all sodium channels tested. According to Escoubas et al., 2006 and Nicolas et al., 2019, it is selective over Nav1.7/SCN9A (90% inhibition at 1 uM), versus Nav1.4 and Nav1.6 (35% inhibition), and shows a small inhibition on all other sodium channels (except Nav1.8/SCN10A). According to Goncalves et al., 2019, it shows a similar inhibition on almost all sodium channels tested (Nav1.1/SCN1A (IC(50)=280.3 nM), Nav1.2/SCN2A (IC(50)=73.7 nM), Nav1.3/SCN3A (IC(50)=201.5 nM), Nav1.4/SCN4A (IC(50)&gt;2100 nM), Nav1.5/SCN5A (IC(50)=710.6 nM), Nav1.6/SCN8A (IC(50)=491.2 nM), and Nav1.7/SCN9A (IC(50)=254.3-260 nM)), except Nav1.8/SCN10A. The voltage-dependence of steady-state Nav1.7/SCN9A channel activation and inactivation are not affected, suggesting that is does not act as a gating-modifier toxin but rather blocks or impedes ion flux through the channel pore. The toxin effect is partial and poorly reversible. In addition to its inhibition to sodium channels, it also shows a small inhibition on rat Kv3.4/KCNC4 potassium channels (20% inhibition at 1 uM). In vivo, when tested on pain models, it shows analgesic activity. The polypeptide is Mu-theraphotoxin-Pspp1 (Phlogiellus sp. (Tarantula)).